The chain runs to 1036 residues: Nitrogen catabolic enzyme regulatory protein (1036 aa).

Over residues 1–17 the composition is skewed to low complexity; it reads MAASTTTPTATTRPFFT. 7 disordered regions span residues 1–126, 207–240, 256–298, 318–351, 590–743, 792–976, and 1000–1028; these read MAAS…HTQS, TDRT…SQGS, TPAG…QSQH, GYLP…HVSA, SSQG…PTTC, RGSG…PTTQ, and GMPN…TGAE. A compositionally biased stretch (basic and acidic residues) spans 23–34; that stretch reads TEHDFRFPRRPG. Residues 45-56 show a composition bias toward low complexity; the sequence is AAMSSSSANNNH. Repeat copies occupy residues 49–55, 87–92, and 105–110. The 3 X approximate repeats stretch occupies residues 49-110; it reads SSSANNNHNQ…INHQSSSNNN (62 aa). A compositionally biased stretch (low complexity) spans 100–114; sequence NINHQSSSNNNISKN. A compositionally biased stretch (polar residues) spans 652 to 661; that stretch reads PRSQSQSFRQ. The segment covering 703-714 has biased composition (low complexity); sequence SSGLSSVPASRP. Over residues 723–736 the composition is skewed to polar residues; it reads QGSTTNLQGAAGNS. The segment at 743-767 adopts a GATA-type zinc-finger fold; that stretch reads CTNCFTQTTPLWRRNPDGQPLCNAC. The segment covering 802-827 has biased composition (polar residues); sequence GTSTRSKKNASMSAAARKNSTLSITS. Composition is skewed to low complexity over residues 828-861 and 868-899; these read NANN…ASGP and AGST…SAPP. Positions 927–961 are enriched in polar residues; that stretch reads SAGSDQPVSAGAVSSSGMDVDSPANSTGSNETMPT. Low complexity predominate over residues 1000-1023; it reads GMPNGQAGQMMGASSSSGPGSGPS.

In terms of assembly, interacts with nmr.

It is found in the nucleus. Major nitrogen regulatory protein. During conditions of nitrogen limitation it turns on the expression of genes for enzymes which are required for the use of a variety of secondary nitrogen sources, including nitrates, purines, amino acids, and proteins. In Neurospora crassa (strain ATCC 24698 / 74-OR23-1A / CBS 708.71 / DSM 1257 / FGSC 987), this protein is Nitrogen catabolic enzyme regulatory protein (nit-2).